A 593-amino-acid chain; its full sequence is Zinc metalloproteinase-disintegrin-like kaouthiagin-like (593 aa).

The N-terminal stretch at 1-20 (MIQALLVIICLAVFPHQGSS) is a signal peptide. Residues 21 to 196 (IILESGNVND…KTSQFTNTPE (176 aa)) constitute a propeptide that is removed on maturation. Positions 205–400 (KYIEFYVIVD…DRPQCILNKP (196 aa)) constitute a Peptidase M12B domain. Residues E208 and D292 each coordinate Ca(2+). 3 disulfide bridges follow: C316/C395, C356/C379, and C358/C363. N-linked (GlcNAc...) asparagine glycosylation is present at N319. The Zn(2+) site is built by H341, H345, and H351. C395, N398, I410, N413, F415, E417, E420, and D423 together coordinate Ca(2+). The Disintegrin domain maps to 408–477 (PPICGNYFVE…ECPTDSLQRN (70 aa)). 12 cysteine pairs are disulfide-bonded: C411–C440, C422–C435, C424–C430, C434–C462, C449–C469, C456–C488, C481–C493, C500–C550, C515–C558, C528–C538, C545–C581, and C575–C586. The D/ECD-tripeptide motif lies at 455–457 (DCD). Positions 457, 458, 460, 472, and 473 each coordinate Ca(2+). N-linked (GlcNAc...) asparagine glycosylation is present at N490.

The protein belongs to the venom metalloproteinase (M12B) family. P-III subfamily. P-IIIa sub-subfamily. In terms of assembly, monomer. Requires Zn(2+) as cofactor. Expressed by the venom gland.

The protein localises to the secreted. Snake venom zinc metalloproteinase that cleaves the membrane-bound precursor of TNF-alpha (TNF) into its mature soluble form showing the same digestion pattern than ADAM17. This chain is Zinc metalloproteinase-disintegrin-like kaouthiagin-like, found in Naja atra (Chinese cobra).